We begin with the raw amino-acid sequence, 303 residues long: Probable alpha-L-glutamate ligase (303 aa).

The region spanning 104–287 is the ATP-grasp domain; sequence LQLLAREGID…IAGMMIEFIE (184 aa). ATP is bound by residues Lys141, 178–179, Asp187, and 211–213; these read EY and RSN. Mg(2+)-binding residues include Asp248, Glu260, and Asn262. Asp248, Glu260, and Asn262 together coordinate Mn(2+).

It belongs to the RimK family. Mg(2+) serves as cofactor. Requires Mn(2+) as cofactor.

The polypeptide is Probable alpha-L-glutamate ligase (Pectobacterium carotovorum subsp. carotovorum (strain PC1)).